The primary structure comprises 284 residues: Nucleotide-binding protein Sbal195_0713 (284 aa).

8 to 15 serves as a coordination point for ATP; sequence GRSGSGKS. 56–59 contacts GTP; the sequence is DVRN.

It belongs to the RapZ-like family.

Functionally, displays ATPase and GTPase activities. This is Nucleotide-binding protein Sbal195_0713 from Shewanella baltica (strain OS195).